Reading from the N-terminus, the 29-residue chain is Cytochrome b6-f complex subunit 8 (29 aa).

A helical transmembrane segment spans residues I3–V23.

Belongs to the PetN family. As to quaternary structure, the 4 large subunits of the cytochrome b6-f complex are cytochrome b6, subunit IV (17 kDa polypeptide, PetD), cytochrome f and the Rieske protein, while the 4 small subunits are PetG, PetL, PetM and PetN. The complex functions as a dimer.

The protein localises to the plastid. It localises to the chloroplast thylakoid membrane. In terms of biological role, component of the cytochrome b6-f complex, which mediates electron transfer between photosystem II (PSII) and photosystem I (PSI), cyclic electron flow around PSI, and state transitions. The protein is Cytochrome b6-f complex subunit 8 of Arabis hirsuta (Hairy rock-cress).